A 355-amino-acid chain; its full sequence is Vacuolar protein sorting-associated protein 37C (355 aa).

Ser-29 is modified (phosphoserine). In terms of domain architecture, VPS37 C-terminal spans 78–167; sequence VERCQEQKAK…RKPRASQELA (90 aa). A disordered region spans residues 159–355; it reads KPRASQELAG…PPPGPAWPGY (197 aa). Pro residues-rich tracts occupy residues 170–186 and 194–205; these read APPP…PQGT and PQPPSAMPPYPL. The span at 246-257 shows a compositional bias: low complexity; it reads PAAQPGPRGAAG. Residues 321–355 show a composition bias toward pro residues; sequence PGQPQPSVPLQPPYPPGPAPPYGFPPPPGPAWPGY.

This sequence belongs to the VPS37 family. In terms of assembly, component of the ESCRT-I complex (endosomal sorting complex required for transport I) which consists of TSG101, VPS28, a VPS37 protein (VPS37A to -D) and MVB12A or MVB12B in a 1:1:1:1 stoichiometry. Interacts with TSG101, VPS28, MVB12A and MVB12B. Component of the ESCRT-I complex (endosomal sorting complex required for transport I) which consists of TSG101, VPS28, a VPS37 protein (VPS37A to -D) and UBAP1 in a 1:1:1:1 stoichiometry. Interacts with HGS and STAM2. Interacts with CEP55. Post-translationally, phosphorylated by TBK1.

Its subcellular location is the late endosome membrane. Component of the ESCRT-I complex, a regulator of vesicular trafficking process. Required for the sorting of endocytic ubiquitinated cargos into multivesicular bodies. May be involved in cell growth and differentiation. This Pongo abelii (Sumatran orangutan) protein is Vacuolar protein sorting-associated protein 37C (VPS37C).